A 338-amino-acid chain; its full sequence is Cytoskeleton protein RodZ (338 aa).

Residues 1 to 111 (MNTEATHEEN…LGKSRKKRDG (111 aa)) are Cytoplasmic-facing. The HTH cro/C1-type domain occupies 19–71 (LRLAREQLGLSQQVVAERLCLKVSTVRDIEEDKAPADLASTFLRGYIRSYARL). Positions 30–49 (QQVVAERLCLKVSTVRDIEE) form a DNA-binding region, H-T-H motif. A helical; Signal-anchor for type II membrane protein transmembrane segment spans residues 112-132 (WLMSFTWLVLFVVVGLTGAWW). The Periplasmic portion of the chain corresponds to 133–338 (WQNHKAQQEE…TLNAEQSVTQ (206 aa)). 2 stretches are compositionally biased toward polar residues: residues 147–180 (ADQSSAELSQNAANSPQSVPLNTDNTADASQDQA) and 189–214 (GDTQNTASNNPQPTPVPSSNTASQQP). The segment at 147–245 (ADQSSAELSQ…AQSQLPVGQA (99 aa)) is disordered. Residues 220-239 (SQANTDTAAQQNTTQPAQSQ) are compositionally biased toward low complexity.

Belongs to the RodZ family.

The protein resides in the cell inner membrane. In terms of biological role, cytoskeletal protein that is involved in cell-shape control through regulation of the length of the long axis. The chain is Cytoskeleton protein RodZ from Cronobacter sakazakii (strain ATCC BAA-894) (Enterobacter sakazakii).